The following is a 366-amino-acid chain: Glucan organizing enzyme 1 (366 aa).

Residues 1 to 24 (MLPLWARGGKPIVIPLPQKRHITL) are Extracellular-facing. Residues 25–45 (PALPILLLLLGTGFLLHSLFF) form a helical membrane-spanning segment. Residues 46-366 (PPPPPHPPGK…ETYKKWKRGH (321 aa)) lie on the Cytoplasmic side of the membrane.

The protein belongs to the glycosyltransferase 32 family.

It is found in the cell membrane. In terms of biological role, plays a role in the localization of glycogen rosettes to the plasma membrane. Required for correct cell wall organization and may facilitate the connection between beta-1,3-glucan and beta-1,6-glucan in the cell wall. This is Glucan organizing enzyme 1 from Cryptococcus neoformans var. grubii serotype A (strain H99 / ATCC 208821 / CBS 10515 / FGSC 9487) (Filobasidiella neoformans var. grubii).